Consider the following 231-residue polypeptide: Monothiol glutaredoxin-6 (231 aa).

The signal sequence occupies residues 1–29 (MIPSNKRNARILSITTLLLLLVFFVAQNA). The Glutaredoxin domain occupies 116–219 (QKEYSLILDL…ESLQVWSDGK (104 aa)). [2Fe-2S] cluster is bound at residue cysteine 136.

It belongs to the glutaredoxin family. Monothiol subfamily.

It is found in the vacuole. This chain is Monothiol glutaredoxin-6 (GRX6), found in Saccharomyces cerevisiae (strain ATCC 204508 / S288c) (Baker's yeast).